The following is a 347-amino-acid chain: NADH-ubiquinone oxidoreductase chain 2 (347 aa).

The next 10 membrane-spanning stretches (helical) occupy residues 3 to 23 (PIIY…VMIS), 25 to 45 (HWLL…PVLM), 59 to 79 (YFLT…INLL), 89 to 109 (MFNP…LGLS), 149 to 169 (INPN…GWGG), 178 to 198 (IMAY…PYNT), 200 to 220 (MTIL…MLLI), 237 to 257 (MPVI…LPPL), 274 to 294 (ESII…YFYM), and 325 to 345 (LLPT…ALSS).

This sequence belongs to the complex I subunit 2 family. In terms of assembly, core subunit of respiratory chain NADH dehydrogenase (Complex I) which is composed of 45 different subunits. Interacts with TMEM242.

The protein resides in the mitochondrion inner membrane. It carries out the reaction a ubiquinone + NADH + 5 H(+)(in) = a ubiquinol + NAD(+) + 4 H(+)(out). Functionally, core subunit of the mitochondrial membrane respiratory chain NADH dehydrogenase (Complex I) which catalyzes electron transfer from NADH through the respiratory chain, using ubiquinone as an electron acceptor. Essential for the catalytic activity and assembly of complex I. This chain is NADH-ubiquinone oxidoreductase chain 2, found in Sus scrofa (Pig).